The following is a 367-amino-acid chain: Damage-control phosphatase At2g17340 (367 aa).

Position 1 is an N-acetylmethionine (methionine 1). Residues aspartate 220, asparagine 221, and aspartate 256 each coordinate Mn(2+). The short motif at 318–322 (EGMGR) is the Subfamily II EGMGR motif element.

This sequence belongs to the damage-control phosphatase family. Phosphopantetheine phosphatase II subfamily. In terms of assembly, multimer. The cofactor is Mn(2+). Ni(2+) is required as a cofactor.

With respect to regulation, activity is strongly promoted by Co(2+), Ni(2+), Mg(2+), Cu(2+) and Mn(2+). Activity is inhibited by EDTA. In terms of biological role, metal-dependent phosphatase with probable damage-control functions. Shows phosphatase activity against several substrates, including sugar phosphates and p-nitrophenyl phosphate(pNPP). Prefers sugar phosphate substrates, including the extremely potent glycating agents ribose-5-phosphate and erythrose-4-phosphate. This Arabidopsis thaliana (Mouse-ear cress) protein is Damage-control phosphatase At2g17340.